The primary structure comprises 93 residues: Pyrimidine/purine nucleoside phosphorylase (93 aa).

Belongs to the nucleoside phosphorylase PpnP family.

The enzyme catalyses a purine D-ribonucleoside + phosphate = a purine nucleobase + alpha-D-ribose 1-phosphate. The catalysed reaction is adenosine + phosphate = alpha-D-ribose 1-phosphate + adenine. It carries out the reaction cytidine + phosphate = cytosine + alpha-D-ribose 1-phosphate. It catalyses the reaction guanosine + phosphate = alpha-D-ribose 1-phosphate + guanine. The enzyme catalyses inosine + phosphate = alpha-D-ribose 1-phosphate + hypoxanthine. The catalysed reaction is thymidine + phosphate = 2-deoxy-alpha-D-ribose 1-phosphate + thymine. It carries out the reaction uridine + phosphate = alpha-D-ribose 1-phosphate + uracil. It catalyses the reaction xanthosine + phosphate = alpha-D-ribose 1-phosphate + xanthine. Its function is as follows. Catalyzes the phosphorolysis of diverse nucleosides, yielding D-ribose 1-phosphate and the respective free bases. Can use uridine, adenosine, guanosine, cytidine, thymidine, inosine and xanthosine as substrates. Also catalyzes the reverse reactions. This is Pyrimidine/purine nucleoside phosphorylase from Photobacterium profundum (strain SS9).